Here is a 62-residue protein sequence, read N- to C-terminus: Large ribosomal subunit protein bL28 (62 aa).

The disordered stretch occupies residues 1–27; that stretch reads MARECYITGRKARSGNKRSHAMNKSKR. Over residues 10–27 the composition is skewed to basic residues; the sequence is RKARSGNKRSHAMNKSKR.

It belongs to the bacterial ribosomal protein bL28 family.

In Shouchella clausii (strain KSM-K16) (Alkalihalobacillus clausii), this protein is Large ribosomal subunit protein bL28.